The following is a 65-amino-acid chain: MSYNCCCGNFSSHSCEGYLCYSGYSRGGSSYPSNLVYSTEPLISQHLPAGFLSLQGLSGDLLGNP.

In terms of assembly, interacts with hair keratins.

Functionally, in the hair cortex, hair keratin intermediate filaments are embedded in an interfilamentous matrix, consisting of hair keratin-associated proteins (KRTAP), which are essential for the formation of a rigid and resistant hair shaft through their extensive disulfide bond cross-linking with abundant cysteine residues of hair keratins. The matrix proteins include the high-sulfur and high-glycine-tyrosine keratins. The protein is Keratin-associated protein 23-1 (KRTAP23-1) of Homo sapiens (Human).